The sequence spans 432 residues: Protein ABHD8 (432 aa).

Disordered stretches follow at residues 47 to 69 (KHAG…QGDQ) and 121 to 149 (PAGS…RPKR). Positions 52 to 61 (APAPTPPPPL) are enriched in pro residues. Residues 139–149 (GRRRRARRPKR) are compositionally biased toward basic residues. An AB hydrolase-1 domain is found at 170–272 (VLFFIHGVGG…HKVIMINGGG (103 aa)). Residues serine 245, aspartate 363, and histidine 391 each act as charge relay system in the active site.

This sequence belongs to the AB hydrolase superfamily. In terms of assembly, interacts with NLRP3 (via NACHT and LLR domains); this interaction is enhanced in the presence of NLRP3 inflammasome inducers, such as ATP, nigericin, silica, or alum. Interacts with ZDHHC12.

The protein resides in the cytoplasm. Negatively regulates NLRP3-driven inflammation. Promotes NLRP3 degradation through the chaperone-mediated autophagy (CMA) pathway, hence attenuating inflammasome activation and IL1B secretion. Acts by recruiting palmitoyltransferase ZDHHC12 to NLRP3, facilitating NLRP3 palmitoylation and subsequent degradation. The polypeptide is Protein ABHD8 (Bos taurus (Bovine)).